Consider the following 160-residue polypeptide: Epithelial membrane protein 1 (160 aa).

A helical transmembrane segment spans residues 1 to 21 (MLVLLAGLFVVHIATAIMLFV). N-linked (GlcNAc...) asparagine glycans are attached at residues Asn35 and Asn43. The next 2 helical transmembrane spans lie at 67 to 87 (FMILSIIFSIISLVVFVFQLF) and 95 to 115 (FFLSGSTMLVCWLCILVGVSI). Residue Asn128 is glycosylated (N-linked (GlcNAc...) asparagine). Residues 137 to 157 (FILTWICFCFSFIIGILYMVL) traverse the membrane as a helical segment.

It belongs to the PMP-22/EMP/MP20 family.

The protein resides in the membrane. The sequence is that of Epithelial membrane protein 1 (Emp1) from Mus musculus (Mouse).